The primary structure comprises 415 residues: Cysteate synthase (415 aa).

At Lys104 the chain carries N6-(pyridoxal phosphate)lysine. Pyridoxal 5'-phosphate is bound by residues Asn131 and Thr376.

This sequence belongs to the threonine synthase family. Cysteate synthase subfamily. In terms of assembly, homotrimer. Requires pyridoxal 5'-phosphate as cofactor.

The enzyme catalyses O-phospho-L-serine + sulfite + H(+) = L-cysteate + phosphate. Its pathway is cofactor biosynthesis; coenzyme M biosynthesis. Its function is as follows. Specifically catalyzes the beta-elimination of phosphate from L-phosphoserine and the beta-addition of sulfite to the dehydroalanine intermediate to produce L-cysteate. The protein is Cysteate synthase of Methanothrix thermoacetophila (strain DSM 6194 / JCM 14653 / NBRC 101360 / PT) (Methanosaeta thermophila).